Consider the following 122-residue polypeptide: Large ribosomal subunit protein uL24 (122 aa).

The protein belongs to the universal ribosomal protein uL24 family. In terms of assembly, part of the 50S ribosomal subunit.

In terms of biological role, one of two assembly initiator proteins, it binds directly to the 5'-end of the 23S rRNA, where it nucleates assembly of the 50S subunit. Its function is as follows. One of the proteins that surrounds the polypeptide exit tunnel on the outside of the subunit. This Renibacterium salmoninarum (strain ATCC 33209 / DSM 20767 / JCM 11484 / NBRC 15589 / NCIMB 2235) protein is Large ribosomal subunit protein uL24.